A 302-amino-acid chain; its full sequence is Acetaldehyde dehydrogenase 1 (302 aa).

12-15 contributes to the NAD(+) binding site; the sequence is SGNI. Catalysis depends on C127, which acts as the Acyl-thioester intermediate. Residues 158–166 and N277 contribute to the NAD(+) site; that span reads SAGPGTRAN.

Belongs to the acetaldehyde dehydrogenase family.

It carries out the reaction acetaldehyde + NAD(+) + CoA = acetyl-CoA + NADH + H(+). This chain is Acetaldehyde dehydrogenase 1, found in Mycobacteroides abscessus (strain ATCC 19977 / DSM 44196 / CCUG 20993 / CIP 104536 / JCM 13569 / NCTC 13031 / TMC 1543 / L948) (Mycobacterium abscessus).